A 760-amino-acid polypeptide reads, in one-letter code: Microprocessor complex subunit DGCR8 (760 aa).

The interval 1–71 (METCGSPSPL…PAEDPLNFYG (71 aa)) is disordered. Residues 1-275 (METCGSPSPL…KYGGDSDHPS (275 aa)) are necessary for nuclear localization and retention. Residues 1 to 342 (METCGSPSPL…YFLGTGSIRK (342 aa)) are necessary for interaction with NCL. Phosphoserine is present on residues Ser-35, Ser-92, Ser-95, Ser-271, and Ser-275. The segment covering 263–276 (MEEKYGGDSDHPSD) has biased composition (basic and acidic residues). The segment at 263 to 284 (MEEKYGGDSDHPSDGETSVQPM) is disordered. Positions 276–738 (DGETSVQPMM…LAEEREETRK (463 aa)) are necessary for heme-binding and pri-miRNA processing. Position 279 is a phosphothreonine (Thr-279). Residues 301–334 (EPLPDGWIMTFHNSGVPVYLHRESRVVTWSRPYF) form the WW domain. Heme is bound at residue Cys-352. The interval 361–405 (SEERERAAGIAPPEPELPPDEPDPLGTDAGPPDEKDPLGAEAAPG) is disordered. Glycyl lysine isopeptide (Lys-Gly) (interchain with G-Cter in SUMO2) cross-links involve residues Lys-411 and Lys-487. 2 DRBM domains span residues 498 to 565 (SEVC…ILIP) and 606 to 673 (SPYQ…LLHP). A Phosphoserine modification is found at Ser-664. Positions 688–760 (ESSKMVKQET…GGEPLCTVDV (73 aa)) are interaction with DROSHA. Lys-694 is covalently cross-linked (Glycyl lysine isopeptide (Lys-Gly) (interchain with G-Cter in SUMO2)). The segment at 731–760 (EEREETRKKPKMSIVASAQPGGEPLCTVDV) is disordered.

Monomer; in absence of heme. Homodimer; the association with heme promotes its dimerization. Component of the microprocessor complex, or pri-miRNA processing protein complex, which is composed of DROSHA and DGCR8. The microprocessor complex is a heterotrimer; each of the two DROSHA RNase III domains binds one DGCR8 (via C-terminal region). Interacts with ILF3, NCL and DROSHA. Interacts with CPSF3 and ISY1; this interaction is in an RNA dependent manner. Interacts with PUS10; interaction promotes pri-miRNAs processing. Heme serves as cofactor. Post-translationally, phosphorylated at Ser-664 by ATM upon radiation, which is crucial for its stability. Ubiquitinated, leading to degradation in a proteasome-dependent manner. Deubiquitinated by USP51, leading to stabilization.

The protein resides in the nucleus. It localises to the nucleolus. Its function is as follows. Component of the microprocessor complex that acts as a RNA- and heme-binding protein that is involved in the initial step of microRNA (miRNA) biogenesis. Component of the microprocessor complex that is required to process primary miRNA transcripts (pri-miRNAs) to release precursor miRNA (pre-miRNA) in the nucleus. Within the microprocessor complex, DGCR8 function as a molecular anchor necessary for the recognition of pri-miRNA at dsRNA-ssRNA junction and directs DROSHA to cleave 11 bp away form the junction to release hairpin-shaped pre-miRNAs that are subsequently cut by the cytoplasmic DICER to generate mature miRNAs. The heme-bound DGCR8 dimer binds pri-miRNAs as a cooperative trimer (of dimers) and is active in triggering pri-miRNA cleavage, whereas the heme-free DGCR8 monomer binds pri-miRNAs as a dimer and is much less active. Both double-stranded and single-stranded regions of a pri-miRNA are required for its binding. Specifically recognizes and binds N6-methyladenosine (m6A)-containing pri-miRNAs, a modification required for pri-miRNAs processing. Involved in the silencing of embryonic stem cell self-renewal. Plays also a role in DNA repair by promoting the recruitment of RNF168 to RNF8 and MDC1 at DNA double-strand breaks and subsequently the clearance of DNA breaks. This chain is Microprocessor complex subunit DGCR8 (DGCR8), found in Bos taurus (Bovine).